A 206-amino-acid polypeptide reads, in one-letter code: MKGKFIVFEGNDGSGKSTQILKVEKYLKEKGYKVVTTREPGGTEVGFRIRKLLLDPAYKMDGLTEALLLAADRNEHVKNVLIPALEDGYVVVCDRYILSSIVYQGIVRGVGVENIIKLNSIFEEKIKPDLYIILTLSPEIALQRLKMAGKNDKLDTENFDFHRKVYNGFKEVSKMFKKCVNIEAEGTVEDVFEKVRKVIDDLLKKR.

10-17 (GNDGSGKS) provides a ligand contact to ATP.

It belongs to the thymidylate kinase family.

The catalysed reaction is dTMP + ATP = dTDP + ADP. In terms of biological role, phosphorylation of dTMP to form dTDP in both de novo and salvage pathways of dTTP synthesis. This Caldicellulosiruptor saccharolyticus (strain ATCC 43494 / DSM 8903 / Tp8T 6331) protein is Thymidylate kinase.